The chain runs to 263 residues: Small ribosomal subunit protein bS1c (263 aa).

3 consecutive S1 motif domains span residues 27–96 (GDIV…LSIR), 114–178 (DSLL…LSHR), and 192–260 (GNII…LSMK).

This sequence belongs to the bacterial ribosomal protein bS1 family.

The protein resides in the plastid. The protein localises to the chloroplast. This chain is Small ribosomal subunit protein bS1c (rps1), found in Porphyra purpurea (Red seaweed).